The primary structure comprises 119 residues: Phosphoribosyl-AMP cyclohydrolase (119 aa).

Position 71 (Asp71) interacts with Mg(2+). Cys72 contributes to the Zn(2+) binding site. Positions 73 and 75 each coordinate Mg(2+). Positions 90 and 97 each coordinate Zn(2+).

Belongs to the PRA-CH family. In terms of assembly, homodimer. It depends on Mg(2+) as a cofactor. Zn(2+) is required as a cofactor.

The protein localises to the cytoplasm. It catalyses the reaction 1-(5-phospho-beta-D-ribosyl)-5'-AMP + H2O = 1-(5-phospho-beta-D-ribosyl)-5-[(5-phospho-beta-D-ribosylamino)methylideneamino]imidazole-4-carboxamide. It participates in amino-acid biosynthesis; L-histidine biosynthesis; L-histidine from 5-phospho-alpha-D-ribose 1-diphosphate: step 3/9. In terms of biological role, catalyzes the hydrolysis of the adenine ring of phosphoribosyl-AMP. The chain is Phosphoribosyl-AMP cyclohydrolase from Brucella abortus (strain 2308).